The primary structure comprises 251 residues: Carboxy-S-adenosyl-L-methionine synthase (251 aa).

S-adenosyl-L-methionine is bound by residues Tyr48, 73 to 75, Asn140, and Arg207; that span reads GCS.

This sequence belongs to the class I-like SAM-binding methyltransferase superfamily. Cx-SAM synthase family. In terms of assembly, homodimer.

The enzyme catalyses prephenate + S-adenosyl-L-methionine = carboxy-S-adenosyl-L-methionine + 3-phenylpyruvate + H2O. Its function is as follows. Catalyzes the conversion of S-adenosyl-L-methionine (SAM) to carboxy-S-adenosyl-L-methionine (Cx-SAM). In Hydrogenovibrio crunogenus (strain DSM 25203 / XCL-2) (Thiomicrospira crunogena), this protein is Carboxy-S-adenosyl-L-methionine synthase.